A 173-amino-acid polypeptide reads, in one-letter code: Shikimate kinase 1 (173 aa).

Position 14–19 (14–19 (GAGKST)) interacts with ATP. Ser18 contributes to the Mg(2+) binding site. Substrate contacts are provided by Asp36, Arg60, and Gly82. Arg120 is an ATP binding site. Residue Arg140 coordinates substrate. Gln157 provides a ligand contact to ATP.

This sequence belongs to the shikimate kinase family. As to quaternary structure, monomer. Requires Mg(2+) as cofactor.

The protein localises to the cytoplasm. It carries out the reaction shikimate + ATP = 3-phosphoshikimate + ADP + H(+). Its pathway is metabolic intermediate biosynthesis; chorismate biosynthesis; chorismate from D-erythrose 4-phosphate and phosphoenolpyruvate: step 5/7. Catalyzes the specific phosphorylation of the 3-hydroxyl group of shikimic acid using ATP as a cosubstrate. In Enterobacter sp. (strain 638), this protein is Shikimate kinase 1.